A 146-amino-acid chain; its full sequence is Hemoglobin subunit beta-2 (146 aa).

The 145-residue stretch at 2–146 folds into the Globin domain; sequence FLSAEEKGLV…VASALAHRYH (145 aa). N6-succinyllysine is present on Lys17. Residues Ser44 and Ser50 each carry the phosphoserine modification. Position 59 is an N6-succinyllysine (Lys59). Heme b is bound by residues His63 and His92. Arg104 carries the post-translational modification Asymmetric dimethylarginine.

It belongs to the globin family. Heterotetramer of two alpha chains and two beta chains. In terms of tissue distribution, red blood cells.

Involved in oxygen transport from the lung to the various peripheral tissues. This is Hemoglobin subunit beta-2 (HBB2) from Panthera pardus saxicolor (Northern Persian leopard).